Reading from the N-terminus, the 84-residue chain is Putative membrane protein insertion efficiency factor (84 aa).

Belongs to the UPF0161 family.

The protein resides in the cell inner membrane. Its function is as follows. Could be involved in insertion of integral membrane proteins into the membrane. The protein is Putative membrane protein insertion efficiency factor of Shewanella amazonensis (strain ATCC BAA-1098 / SB2B).